We begin with the raw amino-acid sequence, 163 residues long: Phosphopantetheine adenylyltransferase (163 aa).

T10 provides a ligand contact to substrate. Residues 10 to 11 and H18 contribute to the ATP site; that span reads TF. K42, L74, and R88 together coordinate substrate. ATP contacts are provided by residues 89–91, E99, and 124–130; these read GLR and NSFISST.

Belongs to the bacterial CoaD family. In terms of assembly, homohexamer. The cofactor is Mg(2+).

It localises to the cytoplasm. The enzyme catalyses (R)-4'-phosphopantetheine + ATP + H(+) = 3'-dephospho-CoA + diphosphate. The protein operates within cofactor biosynthesis; coenzyme A biosynthesis; CoA from (R)-pantothenate: step 4/5. Its function is as follows. Reversibly transfers an adenylyl group from ATP to 4'-phosphopantetheine, yielding dephospho-CoA (dPCoA) and pyrophosphate. The protein is Phosphopantetheine adenylyltransferase of Shewanella baltica (strain OS195).